Consider the following 189-residue polypeptide: Ribosome maturation factor RimM (189 aa).

The region spanning 110–189 (DDEYYWKDLI…TVTVDWDPNF (80 aa)) is the PRC barrel domain.

Belongs to the RimM family. As to quaternary structure, binds ribosomal protein uS19.

The protein resides in the cytoplasm. Functionally, an accessory protein needed during the final step in the assembly of 30S ribosomal subunit, possibly for assembly of the head region. Essential for efficient processing of 16S rRNA. May be needed both before and after RbfA during the maturation of 16S rRNA. It has affinity for free ribosomal 30S subunits but not for 70S ribosomes. This is Ribosome maturation factor RimM from Blochmanniella pennsylvanica (strain BPEN).